Consider the following 453-residue polypeptide: uncharacterized protein (453 aa).

Residues 5-63 (LLKKNQSIELTIEDLTHDGSGVGKIDGYPFFIPNTLPGEKVTAKIIKLNKNYGFARMEN) form the TRAM domain. [4Fe-4S] cluster contacts are provided by C76, C82, C85, and C162. The S-adenosyl-L-methionine site is built by Q285, Y314, E335, and D383. Catalysis depends on C410, which acts as the Nucleophile.

Belongs to the class I-like SAM-binding methyltransferase superfamily. RNA M5U methyltransferase family.

This is an uncharacterized protein from Listeria monocytogenes serovar 1/2a (strain ATCC BAA-679 / EGD-e).